A 333-amino-acid chain; its full sequence is Protein farnesyltransferase/geranylgeranyltransferase type-1 subunit alpha (333 aa).

PFTA repeat units follow at residues 61–95, 96–130, 132–166, 167–200, and 207–241; these read LSSR…SLKV, DLHV…KLGP, ARNS…NLGG, WEDE…RSPV, and MRES…DEST.

This sequence belongs to the protein prenyltransferase subunit alpha family. In terms of assembly, heterodimer of FTA and FTB (farnesyltransferase). Heterodimer of an alpha and a beta subunit. It depends on Mg(2+) as a cofactor.

It catalyses the reaction L-cysteinyl-[protein] + (2E,6E)-farnesyl diphosphate = S-(2E,6E)-farnesyl-L-cysteinyl-[protein] + diphosphate. The enzyme catalyses geranylgeranyl diphosphate + L-cysteinyl-[protein] = S-geranylgeranyl-L-cysteinyl-[protein] + diphosphate. Functionally, essential subunit of both the farnesyltransferase and the geranylgeranyltransferase complex. Contributes to the transfer of a farnesyl or geranylgeranyl moiety from farnesyl or geranylgeranyl diphosphate to a cysteine at the fourth position from the C-terminus of several proteins having the C-terminal sequence Cys-aliphatic-aliphatic-X. The chain is Protein farnesyltransferase/geranylgeranyltransferase type-1 subunit alpha (FTA) from Pisum sativum (Garden pea).